Reading from the N-terminus, the 529-residue chain is Peptide chain release factor 3 (529 aa).

The tr-type G domain occupies 11-280 (AKRRTFAIIS…GLVEWAPAPM (270 aa)). GTP-binding positions include 20–27 (SHPDAGKT), 88–92 (DTPGH), and 142–145 (NKLD).

It belongs to the TRAFAC class translation factor GTPase superfamily. Classic translation factor GTPase family. PrfC subfamily.

It is found in the cytoplasm. In terms of biological role, increases the formation of ribosomal termination complexes and stimulates activities of RF-1 and RF-2. It binds guanine nucleotides and has strong preference for UGA stop codons. It may interact directly with the ribosome. The stimulation of RF-1 and RF-2 is significantly reduced by GTP and GDP, but not by GMP. The sequence is that of Peptide chain release factor 3 from Shigella flexneri.